Consider the following 196-residue polypeptide: Serine recombinase PinR (196 aa).

The Resolvase/invertase-type recombinase catalytic domain occupies 3 to 143; it reads RIFAYCRIST…SGIVRARGAG (141 aa). Ser11 (O-(5'-phospho-DNA)-serine intermediate) is an active-site residue.

This sequence belongs to the site-specific recombinase resolvase family.

The sequence is that of Serine recombinase PinR (pinR) from Escherichia coli (strain K12).